The chain runs to 221 residues: Histone H1C (221 aa).

Low complexity-rich tracts occupy residues 1–11 and 27–44; these read MTETAATETTP and KKAA…PSAS. Disordered regions lie at residues 1-44 and 123-221; these read MTET…PSAS and AKKK…AAKK. An H15 domain is found at 39 to 112; it reads SGPSASELIV…GASGSFKLNK (74 aa). Composition is skewed to basic residues over residues 123-150 and 158-221; these read AKKK…KPKK and SPKK…AAKK.

It belongs to the histone H1/H5 family.

Its subcellular location is the nucleus. The protein resides in the chromosome. In terms of biological role, histones H1 are necessary for the condensation of nucleosome chains into higher-order structures. The chain is Histone H1C from Xenopus laevis (African clawed frog).